A 412-amino-acid chain; its full sequence is MTLQKAQAERIEKEIRELSRFSAEGPGVTRLTYTPEHAAARETLIAAMKAAALSVREDALGNIIGRREGTDPELPAIAVGSHFDSVRNGGMFDGTAGVVCALEAARVMLENGYVNRHPFEFIAIVEEEGARFSSGMLGGRAIAGLVADRELDSLVDEDGVSVRQAATAFGLKPGELQAAARSAADLRAFIELHIEQGPILEQEQIEIGVVTSIVGVRALRVAVKGRSDHAGTTPMHLRQDALVPAALMVREVNRFVNEIADGTVATVGHLTVAPGGGNQVPGEVDFTLDLRSPHEESLRVLIDRISVMVGEVASQAGVAADVDEFFNLSPVQLAPTMVDAVREAASALQFTHRDISSGAGHDSMFIAQVTDVGMVFVPSRAGRSHVPEEWTDFDDLRKGTEVVLRVMKALDR.

A divalent metal cation contacts are provided by H82, D93, E128, and H193. An N-carbamoyl-L-alpha-amino acid-binding residues include Q196, H229, N278, R291, and G360. Residues 212–330 (SIVGVRALRV…DVDEFFNLSP (119 aa)) are involved in dimerization. Position 385 (H385) interacts with a divalent metal cation.

This sequence belongs to the peptidase M20 family. As to quaternary structure, homodimer. It depends on Mn(2+) as a cofactor. Ni(2+) is required as a cofactor. The cofactor is Co(2+). Fe(2+) serves as cofactor.

It catalyses the reaction an N-carbamoyl-L-alpha-amino acid + H2O + 2 H(+) = an L-alpha-amino acid + NH4(+) + CO2. The enzyme catalyses N-carbamoyl-L-tryptophan + H2O + 2 H(+) = L-tryptophan + NH4(+) + CO2. The catalysed reaction is N-carbamoyl-L-tyrosine + H2O + 2 H(+) = L-tyrosine + NH4(+) + CO2. It carries out the reaction N-carbamoyl-L-phenylalanine + H2O + 2 H(+) = L-phenylalanine + NH4(+) + CO2. Catalyzes the hydrolysis of aliphatic N-carbamoyl-L-alpha-amino acids to free L-alpha-amino acids. Is strictly L-specific since it is inactive toward N-carbamoyl-D-alpha-amino acids. Shows a preference for aromatic N-carbamoyl-L-alpha-amino acids, such as N-carbamoyl-L-tryptophan and N-carbamoyl-L-tyrosine and, to a lesser extent, N-carbamoyl-L-phenylalanine and the non-natural amino acid N-carbamoyl-L-thienylalanine. Carbamoyl derivatives of beta-alanine and charged aliphatic amino acids are not accepted as substrates. The polypeptide is N-carbamoyl-L-amino-acid amidohydrolase (Paenarthrobacter aurescens (Arthrobacter aurescens)).